We begin with the raw amino-acid sequence, 150 residues long: Large ribosomal subunit protein bL9 (150 aa).

It belongs to the bacterial ribosomal protein bL9 family.

In terms of biological role, binds to the 23S rRNA. The polypeptide is Large ribosomal subunit protein bL9 (Pseudarthrobacter chlorophenolicus (strain ATCC 700700 / DSM 12829 / CIP 107037 / JCM 12360 / KCTC 9906 / NCIMB 13794 / A6) (Arthrobacter chlorophenolicus)).